Reading from the N-terminus, the 373-residue chain is GTPase-activating protein gyp10 (373 aa).

The Rab-GAP TBC domain occupies 35–220 (FLMKSLRKSV…RLFDFFISSH (186 aa)). A helical transmembrane segment spans residues 343–363 (IFNGCNMLAAITVIGIGIVAS).

It is found in the endoplasmic reticulum membrane. Has a role in vesicular trafficking and septation during cytokinesis. This is GTPase-activating protein gyp10 (gyp10) from Schizosaccharomyces pombe (strain 972 / ATCC 24843) (Fission yeast).